A 226-amino-acid polypeptide reads, in one-letter code: 2-C-methyl-D-erythritol 4-phosphate cytidylyltransferase (226 aa).

It belongs to the IspD/TarI cytidylyltransferase family. IspD subfamily.

It carries out the reaction 2-C-methyl-D-erythritol 4-phosphate + CTP + H(+) = 4-CDP-2-C-methyl-D-erythritol + diphosphate. It functions in the pathway isoprenoid biosynthesis; isopentenyl diphosphate biosynthesis via DXP pathway; isopentenyl diphosphate from 1-deoxy-D-xylulose 5-phosphate: step 2/6. Its function is as follows. Catalyzes the formation of 4-diphosphocytidyl-2-C-methyl-D-erythritol from CTP and 2-C-methyl-D-erythritol 4-phosphate (MEP). The polypeptide is 2-C-methyl-D-erythritol 4-phosphate cytidylyltransferase (Bacillus mycoides (strain KBAB4) (Bacillus weihenstephanensis)).